A 382-amino-acid chain; its full sequence is tRNA (guanine(26)-N(2))-dimethyltransferase (382 aa).

Residues 4-370 (TEVIEGKARL…REFSEILECV (367 aa)) form the Trm1 methyltransferase domain. Residues arginine 44, arginine 69, aspartate 87, aspartate 113, and alanine 114 each contribute to the S-adenosyl-L-methionine site. Zn(2+) contacts are provided by cysteine 244, cysteine 247, cysteine 261, and cysteine 264.

Belongs to the class I-like SAM-binding methyltransferase superfamily. Trm1 family.

It carries out the reaction guanosine(26) in tRNA + 2 S-adenosyl-L-methionine = N(2)-dimethylguanosine(26) in tRNA + 2 S-adenosyl-L-homocysteine + 2 H(+). Its function is as follows. Dimethylates a single guanine residue at position 26 of a number of tRNAs using S-adenosyl-L-methionine as donor of the methyl groups. This is tRNA (guanine(26)-N(2))-dimethyltransferase from Metallosphaera sedula (strain ATCC 51363 / DSM 5348 / JCM 9185 / NBRC 15509 / TH2).